The sequence spans 1624 residues: Pappalysin-1 (1624 aa).

A signal peptide spans 1 to 22; that stretch reads MRLWSWVLRLGLLSAALGCGLA. Positions 23-81 are excised as a propeptide; that stretch reads ERPRRVRRDPRAVRPPRPAAGPATCATRAARGRRASPPPPPGGAWEAVRVPRRRQQRAA. A disordered region spans residues 28-93; sequence VRRDPRAVRP…AEEPSPPSRA (66 aa). Residues 42 to 51 show a composition bias toward low complexity; it reads AGPATCATRA. Disulfide bonds link Cys-141–Cys-232, Cys-324–Cys-619, Cys-329–Cys-654, Cys-411–Cys-425, Cys-421–Cys-437, Cys-454–Cys-470, Cys-471–Cys-482, Cys-580–Cys-597, Cys-584–Cys-609, Cys-707–Cys-875, Cys-710–Cys-878, Cys-750–Cys-832, Cys-772–Cys-778, Cys-944–Cys-972, Cys-957–Cys-968, Cys-980–Cys-987, and Cys-996–Cys-1008. The tract at residues 272–583 is metalloprotease; sequence RGLHTPLPQL…ISEIQSCSDP (312 aa). N-linked (GlcNAc...) asparagine glycosylation is found at Asn-387 and Asn-398. An N-linked (GlcNAc...) asparagine glycan is attached at Asn-426. N-linked (GlcNAc...) asparagine glycosylation occurs at Asn-516. Zn(2+) is bound at residue His-559. Glu-560 is a catalytic residue. Residues His-563 and His-569 each contribute to the Zn(2+) site. Asn-598, Asn-616, and Asn-722 each carry an N-linked (GlcNAc...) asparagine glycan. An N-linked (GlcNAc...) asparagine glycan is attached at Asn-822. Asn-1023 carries N-linked (GlcNAc...) asparagine glycosylation. 19 cysteine pairs are disulfide-bonded: Cys-1033-Cys-1067, Cys-1048-Cys-1136, Cys-1189-Cys-1202, Cys-1212-Cys-1266, Cys-1224-Cys-1235, Cys-1239-Cys-1277, Cys-1282-Cys-1326, Cys-1297-Cys-1307, Cys-1311-Cys-1339, Cys-1343-Cys-1396, Cys-1359-Cys-1370, Cys-1374-Cys-1407, Cys-1412-Cys-1455, Cys-1425-Cys-1435, Cys-1439-Cys-1468, Cys-1475-Cys-1536, Cys-1489-Cys-1499, Cys-1503-Cys-1551, and Cys-1555-Cys-1573. Sushi domains follow at residues 1210-1279, 1280-1341, 1342-1409, 1410-1470, and 1473-1553; these read ADCP…ACEP, VDCG…LCEL, MCLA…TCVP, VTCD…VCRE, and GQCS…HCVK. N-linked (GlcNAc...) asparagine glycosylation is found at Asn-1219 and Asn-1223. Asn-1320 carries an N-linked (GlcNAc...) asparagine glycan. Asn-1516 is a glycosylation site (N-linked (GlcNAc...) asparagine).

Belongs to the peptidase M43B family. As to quaternary structure, homodimer; disulfide-linked. In pregnancy serum, predominantly found as a disulfide-linked 2:2 heterotetramer with the proform of PRG2. The cofactor is Zn(2+). In terms of tissue distribution, detected in kidney, spleen, brain, ovary, breast, skin, prostate, uterus, and placenta.

Its subcellular location is the secreted. The catalysed reaction is Cleavage of the 135-Met-|-Lys-136 bond in insulin-like growth factor binding protein (IGFBP)-4, and the 143-Ser-|-Lys-144 bond in IGFBP-5.. Functionally, metalloproteinase which specifically cleaves IGFBP-4 and IGFBP-5, resulting in release of bound IGF. Cleavage of IGFBP-4 is dramatically enhanced by the presence of IGF, whereas cleavage of IGFBP-5 is slightly inhibited by the presence of IGF. Isoform 2 cleaves IGFBP-4 very slowly compared to PAPP-A, but its ability to cleave IGFBP-5 is unaffected. In Mus musculus (Mouse), this protein is Pappalysin-1 (Pappa).